Consider the following 279-residue polypeptide: Thymidylate synthase (279 aa).

Arg-29 contacts dUMP. His-59 serves as a coordination point for (6R)-5,10-methylene-5,6,7,8-tetrahydrofolate. 134 to 135 (RR) is a binding site for dUMP. The active-site Nucleophile is the Cys-154. Residues 181 to 184 (RSAD), Asn-192, and 222 to 224 (HIY) each bind dUMP. Asp-184 serves as a coordination point for (6R)-5,10-methylene-5,6,7,8-tetrahydrofolate. Ala-278 serves as a coordination point for (6R)-5,10-methylene-5,6,7,8-tetrahydrofolate.

It belongs to the thymidylate synthase family. Bacterial-type ThyA subfamily. Homodimer.

It is found in the cytoplasm. The enzyme catalyses dUMP + (6R)-5,10-methylene-5,6,7,8-tetrahydrofolate = 7,8-dihydrofolate + dTMP. Its pathway is pyrimidine metabolism; dTTP biosynthesis. Its function is as follows. Catalyzes the reductive methylation of 2'-deoxyuridine-5'-monophosphate (dUMP) to 2'-deoxythymidine-5'-monophosphate (dTMP) while utilizing 5,10-methylenetetrahydrofolate (mTHF) as the methyl donor and reductant in the reaction, yielding dihydrofolate (DHF) as a by-product. This enzymatic reaction provides an intracellular de novo source of dTMP, an essential precursor for DNA biosynthesis. The sequence is that of Thymidylate synthase from Paracidovorax citrulli (strain AAC00-1) (Acidovorax citrulli).